We begin with the raw amino-acid sequence, 333 residues long: Ketol-acid reductoisomerase (NADP(+)) (333 aa).

The KARI N-terminal Rossmann domain occupies 2–182 (ANIYYDADCD…GGGRAGILET (181 aa)). Residues 25–28 (YGSQ), Lys-48, Ser-51, Ser-53, and 83–86 (DTIQ) each bind NADP(+). The active site involves His-108. Gly-134 contributes to the NADP(+) binding site. In terms of domain architecture, KARI C-terminal knotted spans 183 to 331 (SFREETETDL…KKLRSMMKWL (149 aa)). Mg(2+) contacts are provided by Asp-191, Glu-195, Glu-227, and Glu-231. Ser-252 is a substrate binding site.

This sequence belongs to the ketol-acid reductoisomerase family. Requires Mg(2+) as cofactor.

It carries out the reaction (2R)-2,3-dihydroxy-3-methylbutanoate + NADP(+) = (2S)-2-acetolactate + NADPH + H(+). The enzyme catalyses (2R,3R)-2,3-dihydroxy-3-methylpentanoate + NADP(+) = (S)-2-ethyl-2-hydroxy-3-oxobutanoate + NADPH + H(+). It functions in the pathway amino-acid biosynthesis; L-isoleucine biosynthesis; L-isoleucine from 2-oxobutanoate: step 2/4. The protein operates within amino-acid biosynthesis; L-valine biosynthesis; L-valine from pyruvate: step 2/4. Its function is as follows. Involved in the biosynthesis of branched-chain amino acids (BCAA). Catalyzes an alkyl-migration followed by a ketol-acid reduction of (S)-2-acetolactate (S2AL) to yield (R)-2,3-dihydroxy-isovalerate. In the isomerase reaction, S2AL is rearranged via a Mg-dependent methyl migration to produce 3-hydroxy-3-methyl-2-ketobutyrate (HMKB). In the reductase reaction, this 2-ketoacid undergoes a metal-dependent reduction by NADPH to yield (R)-2,3-dihydroxy-isovalerate. In Leptospira borgpetersenii serovar Hardjo-bovis (strain JB197), this protein is Ketol-acid reductoisomerase (NADP(+)).